The sequence spans 628 residues: Siderophore iron transporter 1 (628 aa).

The next 14 membrane-spanning stretches (helical) occupy residues 68–88, 107–127, 132–152, 164–184, 194–214, 225–245, 285–305, 317–337, 354–374, 394–414, 420–440, 448–468, 488–508, and 559–579; these read IYRVALFFSLFLIAYAYGLDG, LLSTVNCIKTVIAAVGQIFFA, IFGRFSIMIVSIIFYSMGTII, VGGCFYQLGLTGIILILEVIA, LLALFIPALPFIINTWISGNV, GIGMWAFILPLACIPLGICML, IIGMLLITVFFGCVLVPFTLA, IIVPEVIGWVVVLPLYMLWEI, GIFFALLIAFFINFNWYMQGD, ITSLYSFVSVIVGTILGFILI, KPFIIFGISCWIVSFGLLVHY, SGIIGSLCLLGFGAGSFTYVT, LYLATYNIGSAFGSSVSGAVW, and KILCIIGLVFCFPLLGCAFML.

Belongs to the major facilitator superfamily.

The protein resides in the endosome membrane. Its function is as follows. Involved in the transport of siderophore ferrioxamine B and so has a role in iron homeostasis. This is Siderophore iron transporter 1 (SIT1) from Saccharomyces cerevisiae (strain ATCC 204508 / S288c) (Baker's yeast).